Consider the following 760-residue polypeptide: Catecholate siderophore receptor Fiu (760 aa).

A signal peptide spans 1–31; sequence MENNRNFPARQFHSLTFFAGLCIGITPVAQA. The TBDR plug domain occupies 67 to 175; the sequence is PVADTTRTMT…PTGSINMISK (109 aa). Residues 180–760 form the TBDR beta-barrel domain; that stretch reads DSGIDASASI…TFLLTANMHF (581 aa). The TonB C-terminal box motif lies at 743–760; sequence RYHPGEPRTFLLTANMHF.

It belongs to the TonB-dependent receptor family.

The protein localises to the cell outer membrane. In terms of biological role, involved in the active transport across the outer membrane of iron complexed with catecholate siderophores such as dihydroxybenzoylserine and dihydroxybenzoate. It derives its energy for transport by interacting with the trans-periplasmic membrane protein TonB. Can also transport catechol-substituted cephalosporins. Receptor for microcins M, H47 and E492. This is Catecholate siderophore receptor Fiu (fiu) from Escherichia coli (strain UTI89 / UPEC).